A 491-amino-acid chain; its full sequence is MTNYFNSLSLRDQLAQLGTCRFMELDEFSNEVAVLKDKKIVIVGCGAQGLNQGLNMRDSGLDISYALREGAIKEKRQSWKNATENNFNVGTYEELIPKADLVINLTPDKQHTSVIKAIQPHIKKDAVLSYSHGFNIVEEGTKIREDITVIMVAPKCPGTEVREEYKRGFGVPTLIAVHPENDPHGIGLDWAKAYAYATGGHRAGVLESSFVAEVKSDLMGEQTMLCGVLQTGSILTFDKMVADGVEPNYAAKLIQYGWETITEALKHGGITNMMDRLSNPAKLRANEIAEELKEKMRPLFQKHMDDIISGEFSSRMMRDWANDDKELLTWRAETENTAFEKTEATSEEIKEQEYFDKGVLMVAFVRAGVELAFETMVEAGIIEESAYYESLHETPLIANTIARKKLYEMNRVISDTAEYGCYLFDHAAKPLVKDYVNSLEPEVAGKKFGTDCNGVDNQKLIHVNDDLRSHPVEKVGARLRTAMTAMKKIYA.

Positions 15–208 constitute a KARI N-terminal Rossmann domain; it reads AQLGTCRFME…GGHRAGVLES (194 aa). NADP(+)-binding positions include 45-48, arginine 68, arginine 76, serine 78, and 108-110; these read CGAQ and DKQ. Histidine 132 is a catalytic residue. Glycine 158 contributes to the NADP(+) binding site. KARI C-terminal knotted domains are found at residues 209–353 and 354–486; these read SFVA…KEQE and YFDK…MTAM. Residues aspartate 217, glutamate 221, glutamate 389, and glutamate 393 each coordinate Mg(2+). Serine 414 is a binding site for substrate.

Belongs to the ketol-acid reductoisomerase family. Mg(2+) is required as a cofactor.

It carries out the reaction (2R)-2,3-dihydroxy-3-methylbutanoate + NADP(+) = (2S)-2-acetolactate + NADPH + H(+). It catalyses the reaction (2R,3R)-2,3-dihydroxy-3-methylpentanoate + NADP(+) = (S)-2-ethyl-2-hydroxy-3-oxobutanoate + NADPH + H(+). The protein operates within amino-acid biosynthesis; L-isoleucine biosynthesis; L-isoleucine from 2-oxobutanoate: step 2/4. Its pathway is amino-acid biosynthesis; L-valine biosynthesis; L-valine from pyruvate: step 2/4. Functionally, involved in the biosynthesis of branched-chain amino acids (BCAA). Catalyzes an alkyl-migration followed by a ketol-acid reduction of (S)-2-acetolactate (S2AL) to yield (R)-2,3-dihydroxy-isovalerate. In the isomerase reaction, S2AL is rearranged via a Mg-dependent methyl migration to produce 3-hydroxy-3-methyl-2-ketobutyrate (HMKB). In the reductase reaction, this 2-ketoacid undergoes a metal-dependent reduction by NADPH to yield (R)-2,3-dihydroxy-isovalerate. This chain is Ketol-acid reductoisomerase (NADP(+)), found in Christiangramia forsetii (strain DSM 17595 / CGMCC 1.15422 / KT0803) (Gramella forsetii).